The following is a 442-amino-acid chain: tRNA modification GTPase MnmE (442 aa).

R24, E82, and K120 together coordinate (6S)-5-formyl-5,6,7,8-tetrahydrofolate. The region spanning 217-367 (GLHIVITGEP…LISLIKEKAE (151 aa)) is the TrmE-type G domain. GTP contacts are provided by residues 227-232 (NVGKST), 246-252 (SEYAGTT), and 271-274 (DTAG). Mg(2+)-binding residues include S231 and T252. K442 provides a ligand contact to (6S)-5-formyl-5,6,7,8-tetrahydrofolate.

The protein belongs to the TRAFAC class TrmE-Era-EngA-EngB-Septin-like GTPase superfamily. TrmE GTPase family. Homodimer. Heterotetramer of two MnmE and two MnmG subunits. K(+) serves as cofactor.

The protein resides in the cytoplasm. Functionally, exhibits a very high intrinsic GTPase hydrolysis rate. Involved in the addition of a carboxymethylaminomethyl (cmnm) group at the wobble position (U34) of certain tRNAs, forming tRNA-cmnm(5)s(2)U34. In Wolbachia sp. subsp. Drosophila simulans (strain wRi), this protein is tRNA modification GTPase MnmE.